The sequence spans 274 residues: Large ribosomal subunit protein uL2 (274 aa).

The disordered stretch occupies residues 221 to 274 (RGTAMNPVDHPHGGGEGRNFGKHPVTPWGVQTKGKKTRSNKRTDKFIVRRRSKK).

It belongs to the universal ribosomal protein uL2 family. In terms of assembly, part of the 50S ribosomal subunit. Forms a bridge to the 30S subunit in the 70S ribosome.

Functionally, one of the primary rRNA binding proteins. Required for association of the 30S and 50S subunits to form the 70S ribosome, for tRNA binding and peptide bond formation. It has been suggested to have peptidyltransferase activity; this is somewhat controversial. Makes several contacts with the 16S rRNA in the 70S ribosome. In Yersinia pseudotuberculosis serotype O:1b (strain IP 31758), this protein is Large ribosomal subunit protein uL2.